The chain runs to 645 residues: Glucans biosynthesis glucosyltransferase H (645 aa).

Over residues 1–13 (MDGTVTPSPTTTA) the composition is skewed to polar residues. Residues 1 to 32 (MDGTVTPSPTTTAMPPVSALDAGTPTLPPEAP) are disordered. A run of 7 helical transmembrane segments spans residues 64–84 (LIGG…SVLW), 98–118 (LFVL…AGFV), 423–443 (APMW…GGGI), 465–485 (AIWI…LGYI), 504–524 (AVSI…VMYL), 559–579 (YGGL…VSPA), and 580–600 (LAAW…VVAL).

The protein belongs to the glycosyltransferase 2 family. OpgH subfamily.

It is found in the cell inner membrane. The protein operates within glycan metabolism; osmoregulated periplasmic glucan (OPG) biosynthesis. In terms of biological role, involved in the biosynthesis of osmoregulated periplasmic glucans (OPGs). This Xanthomonas euvesicatoria pv. vesicatoria (strain 85-10) (Xanthomonas campestris pv. vesicatoria) protein is Glucans biosynthesis glucosyltransferase H.